Here is a 63-residue protein sequence, read N- to C-terminus: Large ribosomal subunit protein uL29 (63 aa).

Belongs to the universal ribosomal protein uL29 family.

In Salmonella agona (strain SL483), this protein is Large ribosomal subunit protein uL29.